A 1337-amino-acid chain; its full sequence is Aldehyde oxidase 4 (1337 aa).

A 2Fe-2S ferredoxin-type domain is found at 4–91; it reads DDLVFAVNGE…GCSITTSDGL (88 aa). [2Fe-2S] cluster contacts are provided by Cys43, Cys48, Cys51, Cys73, Cys113, Cys116, Cys155, and Cys157. The FAD-binding PCMH-type domain occupies 225–409; it reads LDQTRYHWST…LKVHIPRWIA (185 aa). Residues 259-266, 342-346, Asp358, and Leu399 contribute to the FAD site; these read LVVGNTGT and SIGGN. Positions 771, 802, and 915 each coordinate Mo-molybdopterin. Glu1265 (proton acceptor) is an active-site residue.

Belongs to the xanthine dehydrogenase family. Aldehyde oxidases (AO) are homodimers and heterodimers of AO subunits. The cofactor is [2Fe-2S] cluster. Requires FAD as cofactor. It depends on Mo-molybdopterin as a cofactor. Transcripts expressed at high levels in developing siliques and at low levels in dry seeds.

The protein resides in the cytoplasm. The enzyme catalyses indole-3-acetaldehyde + O2 + H2O = (indol-3-yl)acetate + H2O2 + H(+). It carries out the reaction an aldehyde + O2 + H2O = a carboxylate + H2O2 + H(+). The catalysed reaction is benzaldehyde + O2 + H2O = benzoate + H2O2 + H(+). It catalyses the reaction hexanal + O2 + H2O = hexanoate + H2O2 + H(+). The enzyme catalyses 1-naphthaldehyde + O2 + H2O = 1-naphthoate + H2O2 + H(+). It carries out the reaction vanillin + O2 + H2O = vanillate + H2O2 + H(+). The catalysed reaction is malonaldehyde + O2 + H2O = 3-oxopropanoate + H2O2 + H(+). It catalyses the reaction citral + O2 + H2O = 3,7-dimethylocta-2,6-dienoate + H2O2 + H(+). The enzyme catalyses acrolein + O2 + H2O = acrylate + H2O2 + H(+). It carries out the reaction (E)-4-hydroxynon-2-enal + O2 + H2O = (E)-4-hydroxynon-2-enoate + H2O2 + H(+). The catalysed reaction is (E)-cinnamaldehyde + O2 + H2O = (E)-cinnamate + H2O2 + H(+). It catalyses the reaction indole-3-carbaldehyde + O2 + H2O = indole-3-carboxylate + H2O2 + H(+). The enzyme catalyses propanal + O2 + H2O = propanoate + H2O2 + H(+). It carries out the reaction dodecanal + O2 + H2O = dodecanoate + H2O2 + H(+). The catalysed reaction is salicylaldehyde + O2 + H2O = salicylate + H2O2 + H(+). With respect to regulation, inhibited by Cu(2+). Its function is as follows. Aldehyde oxidase with a broad substrate specificity. Involved in the accumulation of benzoic acid (BA) in siliques. Delays and protects siliques from senescence by catalyzing aldehyde detoxification in siliques. Catalyzes the oxidation of an array of aromatic and aliphatic aldehydes, including vanillin and the reactive carbonyl species (RCS) acrolein, 4-hydroxyl-2-nonenal (HNE), and malondialdehyde (MDA). The protein is Aldehyde oxidase 4 of Arabidopsis thaliana (Mouse-ear cress).